A 142-amino-acid chain; its full sequence is Serine protease inhibitor (142 aa).

Ser-1 bears the N-acetylserine mark.

In terms of biological role, serine protease inhibitor. Active against beta-trypsin and alpha-chymotrypsin with dissociation constants of 0.35 nM and 40 nM respectively. Inhibits factor XIa, but not other enzymes involved in coagulation and fibrinolysis. Does not inhibit subtilisin, lysyl endopeptidase, arginyl endopeptidase or papain. The sequence is that of Serine protease inhibitor from Lentinula edodes (Shiitake mushroom).